The following is a 101-amino-acid chain: A-type ATP synthase subunit F (101 aa).

The protein belongs to the V-ATPase F subunit family. Has multiple subunits with at least A(3), B(3), C, D, E, F, H, I and proteolipid K(x).

Its subcellular location is the cell membrane. Component of the A-type ATP synthase that produces ATP from ADP in the presence of a proton gradient across the membrane. This is A-type ATP synthase subunit F from Methanosarcina acetivorans (strain ATCC 35395 / DSM 2834 / JCM 12185 / C2A).